Consider the following 358-residue polypeptide: Golgi-resident adenosine 3',5'-bisphosphate 3'-phosphatase (358 aa).

Residue methionine 1 is modified to N-acetylmethionine. Residues 1–12 (MAPMGIRLSPLG) are Cytoplasmic-facing. The helical transmembrane segment at 13-33 (VAVFCLLGLGVLYHLYSGFLA) threads the bilayer. Residues 34 to 358 (GRFSLFGLGG…KLPDLEKMGH (325 aa)) are Lumenal-facing. The interval 85 to 106 (RESNVLHEKSKGKTREGADDKM) is disordered. Aspartate 110 functions as the Proton acceptor in the catalytic mechanism. Mg(2+) contacts are provided by glutamate 133, aspartate 174, leucine 176, and aspartate 177. The active-site Proton acceptor is the threonine 179. Serine 242 and histidine 245 together coordinate AMP. A glycan (N-linked (GlcNAc...) asparagine) is linked at asparagine 259. Glycine 268 and lysine 272 together coordinate AMP. Aspartate 300 lines the Mg(2+) pocket.

This sequence belongs to the inositol monophosphatase superfamily. Requires Mg(2+) as cofactor. Post-translationally, contains N-linked glycan resistant to endoglycosydase H.

The protein resides in the golgi apparatus. The protein localises to the trans-Golgi network membrane. The catalysed reaction is adenosine 3',5'-bisphosphate + H2O = AMP + phosphate. It functions in the pathway sulfur metabolism. With respect to regulation, strongly inhibited by lithium. Exhibits 3'-nucleotidase activity toward adenosine 3',5'-bisphosphate (PAP), namely hydrolyzes adenosine 3',5'-bisphosphate into adenosine 5'-monophosphate (AMP) and a phosphate. May play a role in the formation of skeletal elements derived through endochondral ossification, possibly by clearing adenosine 3',5'-bisphosphate produced by Golgi sulfotransferases during glycosaminoglycan sulfation. Has no activity toward 3'-phosphoadenosine 5'-phosphosulfate (PAPS) or inositol phosphate (IP) substrates including I(1)P, I(1,4)P2, I(1,3,4)P3, I(1,4,5)P3 and I(1,3,4,5)P4. This Callithrix jacchus (White-tufted-ear marmoset) protein is Golgi-resident adenosine 3',5'-bisphosphate 3'-phosphatase (BPNT2).